A 580-amino-acid polypeptide reads, in one-letter code: CTP synthase (580 aa).

A Glutamine amidotransferase type-1 domain is found at 304-559 (NIILVGKYVS…VAASSGCLDE (256 aa)). Residues Cys403, His532, and Glu534 each act as for GATase activity in the active site.

It belongs to the CTP synthase family.

The enzyme catalyses UTP + L-glutamine + ATP + H2O = CTP + L-glutamate + ADP + phosphate + 2 H(+). It functions in the pathway pyrimidine metabolism; CTP biosynthesis via de novo pathway; CTP from UDP: step 2/2. Its function is as follows. Catalyzes the ATP-dependent amination of UTP to CTP with either L-glutamine or ammonia as the source of nitrogen. This Gibberella zeae (strain ATCC MYA-4620 / CBS 123657 / FGSC 9075 / NRRL 31084 / PH-1) (Wheat head blight fungus) protein is CTP synthase (URA7).